The chain runs to 79 residues: Small ribosomal subunit protein bS18 (79 aa).

This sequence belongs to the bacterial ribosomal protein bS18 family. Part of the 30S ribosomal subunit. Forms a tight heterodimer with protein bS6.

Its function is as follows. Binds as a heterodimer with protein bS6 to the central domain of the 16S rRNA, where it helps stabilize the platform of the 30S subunit. In Ureaplasma urealyticum serovar 10 (strain ATCC 33699 / Western), this protein is Small ribosomal subunit protein bS18.